The primary structure comprises 123 residues: Protein Wnt-3 (123 aa).

Residue serine 1 is the site of O-palmitoleoyl serine; by PORCN attachment. Cysteine 89 and cysteine 104 are oxidised to a cystine. Residue asparagine 90 is glycosylated (N-linked (GlcNAc...) asparagine).

Belongs to the Wnt family. In terms of processing, palmitoleoylation is required for efficient binding to frizzled receptors. Depalmitoleoylation leads to Wnt signaling pathway inhibition.

It is found in the secreted. Its subcellular location is the extracellular space. It localises to the extracellular matrix. Ligand for members of the frizzled family of seven transmembrane receptors. Functions in the canonical Wnt signaling pathway that results in activation of transcription factors of the TCF/LEF family. Required for normal embryonic development. In Eptatretus stoutii (Pacific hagfish), this protein is Protein Wnt-3 (WNT-3).